We begin with the raw amino-acid sequence, 504 residues long: Catalase (504 aa).

The segment at 1 to 25 (MSKQDGKLTGLFGAPVSDRENSMTA) is disordered. Residues histidine 56 and asparagine 129 contribute to the active site. Residue tyrosine 339 participates in heme binding.

This sequence belongs to the catalase family. In terms of assembly, homodimer. Heme is required as a cofactor.

The catalysed reaction is 2 H2O2 = O2 + 2 H2O. In terms of biological role, decomposes hydrogen peroxide into water and oxygen; serves to protect cells from the toxic effects of hydrogen peroxide. The polypeptide is Catalase (katA) (Staphylococcus epidermidis (strain ATCC 35984 / DSM 28319 / BCRC 17069 / CCUG 31568 / BM 3577 / RP62A)).